The chain runs to 103 residues: CLAVATA3/ESR (CLE)-related protein 22 (103 aa).

Residues 1–34 (MGNYYSRRKSRKHITTVALIILLLLLFLFLYAKA) form the signal peptide. The tract at residues 37–103 (SSPNIHHHST…FTGPNPLHNR (67 aa)) is disordered. A compositionally biased stretch (basic residues) spans 41–50 (IHHHSTHGSL). A compositionally biased stretch (polar residues) spans 66-76 (NAASSRGSKYT). Position 97 is a hydroxyproline (P97). An O-linked (Ara...) hydroxyproline glycan is attached at P97.

Belongs to the CLV3/ESR signal peptide family. Post-translationally, the O-glycosylation (arabinosylation) of the hydroxyproline Pro-97 enhances binding affinity of the CLE22p peptide for its receptor. Mostly expressed in stems and apex, and, to a lower extent, in seedlings, leaves, flowers and siliques.

The protein localises to the secreted. The protein resides in the extracellular space. Functionally, extracellular signal peptide that regulates cell fate. Represses root apical meristem maintenance. The protein is CLAVATA3/ESR (CLE)-related protein 22 of Arabidopsis thaliana (Mouse-ear cress).